Here is a 371-residue protein sequence, read N- to C-terminus: Chorismate synthase (371 aa).

R48 and R54 together coordinate NADP(+). FMN is bound by residues 132–134 (RSS), 244–245 (NA), G289, 304–308 (KPTSS), and R330.

It belongs to the chorismate synthase family. Homotetramer. FMNH2 is required as a cofactor.

The catalysed reaction is 5-O-(1-carboxyvinyl)-3-phosphoshikimate = chorismate + phosphate. It participates in metabolic intermediate biosynthesis; chorismate biosynthesis; chorismate from D-erythrose 4-phosphate and phosphoenolpyruvate: step 7/7. Functionally, catalyzes the anti-1,4-elimination of the C-3 phosphate and the C-6 proR hydrogen from 5-enolpyruvylshikimate-3-phosphate (EPSP) to yield chorismate, which is the branch point compound that serves as the starting substrate for the three terminal pathways of aromatic amino acid biosynthesis. This reaction introduces a second double bond into the aromatic ring system. In Methylobacterium nodulans (strain LMG 21967 / CNCM I-2342 / ORS 2060), this protein is Chorismate synthase.